We begin with the raw amino-acid sequence, 99 residues long: Malonate decarboxylase acyl carrier protein (99 aa).

Residue Ser-25 is modified to O-(phosphoribosyl dephospho-coenzyme A)serine.

Belongs to the MdcC family. Covalently binds the prosthetic group of malonate decarboxylase.

It localises to the cytoplasm. Its function is as follows. Subunit of malonate decarboxylase, it is an acyl carrier protein to which acetyl and malonyl thioester residues are bound via a 2'-(5''-phosphoribosyl)-3'-dephospho-CoA prosthetic group and turn over during the catalytic mechanism. The sequence is that of Malonate decarboxylase acyl carrier protein from Pseudomonas syringae pv. tomato (strain ATCC BAA-871 / DC3000).